Here is a 754-residue protein sequence, read N- to C-terminus: 5-methyltetrahydropteroyltriglutamate--homocysteine methyltransferase (754 aa).

Residues 16–19 (RELK) and K114 contribute to the 5-methyltetrahydropteroyltri-L-glutamate site. L-homocysteine-binding positions include 430 to 432 (IGS) and E483. L-methionine contacts are provided by residues 430–432 (IGS) and E483. Residues 514-515 (RC) and W560 each bind 5-methyltetrahydropteroyltri-L-glutamate. D598 serves as a coordination point for L-homocysteine. D598 lines the L-methionine pocket. E604 provides a ligand contact to 5-methyltetrahydropteroyltri-L-glutamate. Residues H640, C642, and E664 each contribute to the Zn(2+) site. H693 (proton donor) is an active-site residue. C725 is a Zn(2+) binding site.

The protein belongs to the vitamin-B12 independent methionine synthase family. Zn(2+) is required as a cofactor.

It catalyses the reaction 5-methyltetrahydropteroyltri-L-glutamate + L-homocysteine = tetrahydropteroyltri-L-glutamate + L-methionine. It functions in the pathway amino-acid biosynthesis; L-methionine biosynthesis via de novo pathway; L-methionine from L-homocysteine (MetE route): step 1/1. Functionally, catalyzes the transfer of a methyl group from 5-methyltetrahydrofolate to homocysteine resulting in methionine formation. This Aeromonas salmonicida (strain A449) protein is 5-methyltetrahydropteroyltriglutamate--homocysteine methyltransferase.